The primary structure comprises 464 residues: Argininosuccinate lyase 2 (464 aa).

It belongs to the lyase 1 family. Argininosuccinate lyase subfamily.

The protein resides in the cytoplasm. It carries out the reaction 2-(N(omega)-L-arginino)succinate = fumarate + L-arginine. It functions in the pathway amino-acid biosynthesis; L-arginine biosynthesis; L-arginine from L-ornithine and carbamoyl phosphate: step 3/3. This is Argininosuccinate lyase 2 from Pseudomonas fluorescens (strain Pf0-1).